We begin with the raw amino-acid sequence, 502 residues long: Tyrosine-protein kinase receptor old-1 (502 aa).

Residues 1-19 form the signal peptide; that stretch reads MKGTLIFVVFYSSYGFAHC. Residues 20 to 58 lie on the Extracellular side of the membrane; the sequence is NTILRSSSLSRNFEDSLRRIPRSTDKDETGFEDSNVQEV. Residues 59-79 traverse the membrane as a helical segment; that stretch reads IFILLYCLFVALAILICGLII. At 80-502 the chain is on the cytoplasmic side; the sequence is FYNSRKRELR…WLSDEKHCDS (423 aa). The segment at 99–140 is disordered; the sequence is LLEPTSADHKRRNSSNIVPPEPTPYPITSGESDLRQTPSRLS. Residues 127 to 140 are compositionally biased toward polar residues; sequence SGESDLRQTPSRLS. Residues 175-473 form the Protein kinase domain; it reads ISKGRPLGSG…ELKTTSNEYF (299 aa). Residues 181-189 and Lys213 contribute to the ATP site; that span reads LGSGEFGII. Asp321 acts as the Proton acceptor in catalysis.

This sequence belongs to the protein kinase superfamily. Tyr protein kinase family.

Its subcellular location is the cell membrane. The catalysed reaction is L-tyrosyl-[protein] + ATP = O-phospho-L-tyrosyl-[protein] + ADP + H(+). Its function is as follows. Receptor tyrosine kinase which plays a role in promoting longevity and resistance to stresses including UV irradiation and high temperatures, probably downstream of daf-16. The protein is Tyrosine-protein kinase receptor old-1 of Caenorhabditis elegans.